The following is a 348-amino-acid chain: Selenide, water dikinase (348 aa).

Residue cysteine 17 is part of the active site. ATP is bound by residues lysine 20 and 47-49 (THD). Aspartate 50 contributes to the Mg(2+) binding site. ATP-binding positions include aspartate 67, aspartate 90, and 138 to 140 (GHT). Aspartate 90 lines the Mg(2+) pocket. Mg(2+) is bound at residue aspartate 226.

This sequence belongs to the selenophosphate synthase 1 family. Class I subfamily. Homodimer. It depends on Mg(2+) as a cofactor.

The enzyme catalyses hydrogenselenide + ATP + H2O = selenophosphate + AMP + phosphate + 2 H(+). Functionally, synthesizes selenophosphate from selenide and ATP. This Porphyromonas gingivalis (strain ATCC BAA-308 / W83) protein is Selenide, water dikinase.